A 370-amino-acid polypeptide reads, in one-letter code: tRNA-specific 2-thiouridylase MnmA (370 aa).

Residues 12–19 (GLSGGVDS) and methionine 38 contribute to the ATP site. Positions 98–100 (NPD) are interaction with target base in tRNA. The Nucleophile role is filled by cysteine 103. Cysteines 103 and 201 form a disulfide. Residue glycine 127 coordinates ATP. The interaction with tRNA stretch occupies residues 151–153 (KDQ). Catalysis depends on cysteine 201, which acts as the Cysteine persulfide intermediate. The segment at 319 to 320 (RY) is interaction with tRNA.

Belongs to the MnmA/TRMU family.

Its subcellular location is the cytoplasm. It carries out the reaction S-sulfanyl-L-cysteinyl-[protein] + uridine(34) in tRNA + AH2 + ATP = 2-thiouridine(34) in tRNA + L-cysteinyl-[protein] + A + AMP + diphosphate + H(+). Functionally, catalyzes the 2-thiolation of uridine at the wobble position (U34) of tRNA, leading to the formation of s(2)U34. The polypeptide is tRNA-specific 2-thiouridylase MnmA (Verminephrobacter eiseniae (strain EF01-2)).